The primary structure comprises 206 residues: Anti-sigma-W factor RsiW (206 aa).

The Cytoplasmic portion of the chain corresponds to 1–87 (MSCPEHIVQL…ASINRWLKAH (87 aa)). 3 residues coordinate Zn(2+): His30, Cys34, and Cys37. Residues 88-108 (PFLVAAALFAILMGGSFFSSW) traverse the membrane as a helical segment. The Extracellular segment spans residues 109–206 (KNDHDFSVSS…SVFGVKESKE (98 aa)).

It belongs to the zinc-associated anti-sigma factor (ZAS) superfamily. Anti-sigma-W factor family. Zn(2+) is required as a cofactor. Is processed by three successive proteolytic events. First, the extracellular region of RsiW is cleaved by PrsW (Site-1 cleavage) in response to cell envelope stresses. Next, it undergoes cleavage at an intramembrane site (Site-2 cleavage) mediated by RasP. This cleavage uncovers a cryptic proteolytic tag with conserved alanine residues in the transmembrane segment, that is recognized mainly by the ClpXP protease, which completely degrades the protein in the cytoplasm and leads to the induction of the sigma-W-controlled genes.

The protein localises to the membrane. Functionally, is the anti-sigma factor for SigW. The presence of RsiW leads to the inactivation of SigW, and its proteolytic destruction to sigma-W activation. This chain is Anti-sigma-W factor RsiW (rsiW), found in Bacillus licheniformis (strain ATCC 14580 / DSM 13 / JCM 2505 / CCUG 7422 / NBRC 12200 / NCIMB 9375 / NCTC 10341 / NRRL NRS-1264 / Gibson 46).